A 455-amino-acid polypeptide reads, in one-letter code: 1,4-beta-D-glucan cellobiohydrolase C (455 aa).

A signal peptide spans 1 to 19; it reads MHYSASGLALAFLLPAIQA. Residues 20 to 55 form the CBM1 domain; sequence QQTLYGQCGGSGWTGATSCVAGAACSTLNQWYAQCL. 2 cysteine pairs are disulfide-bonded: Cys-27–Cys-44 and Cys-38–Cys-54. The tract at residues 59–92 is thr-rich linker; it reads TTTSTTLTTTTSSVTTTSNPGSTTTTSSVTVTAT. Residues 66–86 form a disordered region; sequence TTTTSSVTTTSNPGSTTTTSS. The segment at 93 to 450 is catalytic; that stretch reads ASGNPFSGYQ…QAYFVQLLQN (358 aa). The active site involves Asp-185. 2 cysteine pairs are disulfide-bonded: Cys-186/Cys-245 and Cys-377/Cys-424. The active-site Proton donor is the Asp-231. Asp-410 (nucleophile) is an active-site residue.

Belongs to the glycosyl hydrolase 6 (cellulase B) family.

It is found in the secreted. The catalysed reaction is Hydrolysis of (1-&gt;4)-beta-D-glucosidic linkages in cellulose and cellotetraose, releasing cellobiose from the non-reducing ends of the chains.. The biological conversion of cellulose to glucose generally requires three types of hydrolytic enzymes: (1) Endoglucanases which cut internal beta-1,4-glucosidic bonds; (2) Exocellobiohydrolases that cut the disaccharide cellobiose from the non-reducing end of the cellulose polymer chain; (3) Beta-1,4-glucosidases which hydrolyze the cellobiose and other short cello-oligosaccharides to glucose. Active against carboxymethylcellulose, beta-glucan and lichenan. In Emericella nidulans (strain FGSC A4 / ATCC 38163 / CBS 112.46 / NRRL 194 / M139) (Aspergillus nidulans), this protein is 1,4-beta-D-glucan cellobiohydrolase C (cbhC).